The sequence spans 192 residues: Cell division protein SepF (192 aa).

A disordered region spans residues 15 to 70 (GDPLEYEEDGEEYEQVYREENKREEARRATAGTAAAATPTAAAQASDAAPMGSGPA). Residues 18 to 28 (LEYEEDGEEYE) are compositionally biased toward acidic residues. Over residues 29–42 (QVYREENKREEARR) the composition is skewed to basic and acidic residues. Residues 43-63 (ATAGTAAAATPTAAAQASDAA) show a composition bias toward low complexity.

Belongs to the SepF family. As to quaternary structure, homodimer. Interacts with FtsZ.

The protein localises to the cytoplasm. In terms of biological role, cell division protein that is part of the divisome complex and is recruited early to the Z-ring. Probably stimulates Z-ring formation, perhaps through the cross-linking of FtsZ protofilaments. Its function overlaps with FtsA. This chain is Cell division protein SepF, found in Gloeobacter violaceus (strain ATCC 29082 / PCC 7421).